Consider the following 668-residue polypeptide: tRNA 5-methylaminomethyl-2-thiouridine biosynthesis bifunctional protein MnmC (668 aa).

Residues 1–245 (MKHYSIQPAN…KREMLCGVME (245 aa)) form a tRNA (mnm(5)s(2)U34)-methyltransferase region. The interval 270–668 (IGGGIACALL…LLKGKAVKAG (399 aa)) is FAD-dependent cmnm(5)s(2)U34 oxidoreductase.

This sequence in the N-terminal section; belongs to the methyltransferase superfamily. tRNA (mnm(5)s(2)U34)-methyltransferase family. The protein in the C-terminal section; belongs to the DAO family. It depends on FAD as a cofactor.

Its subcellular location is the cytoplasm. The catalysed reaction is 5-aminomethyl-2-thiouridine(34) in tRNA + S-adenosyl-L-methionine = 5-methylaminomethyl-2-thiouridine(34) in tRNA + S-adenosyl-L-homocysteine + H(+). In terms of biological role, catalyzes the last two steps in the biosynthesis of 5-methylaminomethyl-2-thiouridine (mnm(5)s(2)U) at the wobble position (U34) in tRNA. Catalyzes the FAD-dependent demodification of cmnm(5)s(2)U34 to nm(5)s(2)U34, followed by the transfer of a methyl group from S-adenosyl-L-methionine to nm(5)s(2)U34, to form mnm(5)s(2)U34. The polypeptide is tRNA 5-methylaminomethyl-2-thiouridine biosynthesis bifunctional protein MnmC (Shigella boydii serotype 18 (strain CDC 3083-94 / BS512)).